The sequence spans 400 residues: Elongation factor Tu (400 aa).

Residues 10–209 form the tr-type G domain; that stretch reads KPHVNIGTIG…EVDNYIPTPE (200 aa). Positions 19-26 are G1; sequence GHVDHGKT. 19–26 is a binding site for GTP; it reads GHVDHGKT. Thr-26 lines the Mg(2+) pocket. Residues 60–64 form a G2 region; that stretch reads GITIN. Positions 81 to 84 are G3; sequence DCPG. GTP is bound by residues 81–85 and 136–139; these read DCPGH and NKCD. The segment at 136–139 is G4; it reads NKCD. The tract at residues 174–176 is G5; that stretch reads SAL.

This sequence belongs to the TRAFAC class translation factor GTPase superfamily. Classic translation factor GTPase family. EF-Tu/EF-1A subfamily. Monomer.

Its subcellular location is the cytoplasm. It carries out the reaction GTP + H2O = GDP + phosphate + H(+). Its function is as follows. GTP hydrolase that promotes the GTP-dependent binding of aminoacyl-tRNA to the A-site of ribosomes during protein biosynthesis. The chain is Elongation factor Tu from Ruminiclostridium cellulolyticum (strain ATCC 35319 / DSM 5812 / JCM 6584 / H10) (Clostridium cellulolyticum).